Reading from the N-terminus, the 487-residue chain is Glutamyl-tRNA(Gln) amidotransferase subunit A (487 aa).

Active-site charge relay system residues include K82 and S157. S181 acts as the Acyl-ester intermediate in catalysis.

The protein belongs to the amidase family. GatA subfamily. In terms of assembly, heterotrimer of A, B and C subunits.

It catalyses the reaction L-glutamyl-tRNA(Gln) + L-glutamine + ATP + H2O = L-glutaminyl-tRNA(Gln) + L-glutamate + ADP + phosphate + H(+). Its function is as follows. Allows the formation of correctly charged Gln-tRNA(Gln) through the transamidation of misacylated Glu-tRNA(Gln) in organisms which lack glutaminyl-tRNA synthetase. The reaction takes place in the presence of glutamine and ATP through an activated gamma-phospho-Glu-tRNA(Gln). In Fusobacterium nucleatum subsp. nucleatum (strain ATCC 25586 / DSM 15643 / BCRC 10681 / CIP 101130 / JCM 8532 / KCTC 2640 / LMG 13131 / VPI 4355), this protein is Glutamyl-tRNA(Gln) amidotransferase subunit A.